A 571-amino-acid chain; its full sequence is UvrABC system protein C (571 aa).

Residues 15–93 enclose the GIY-YIG domain; it reads TSPGVYLWKD…IDRYNPEFNI (79 aa). The UVR domain occupies 184–219; it reads NNYINELTNKMHQAANNMQFELALFLRDGLTYLKKL.

Belongs to the UvrC family. In terms of assembly, interacts with UvrB in an incision complex.

The protein localises to the cytoplasm. Functionally, the UvrABC repair system catalyzes the recognition and processing of DNA lesions. UvrC both incises the 5' and 3' sides of the lesion. The N-terminal half is responsible for the 3' incision and the C-terminal half is responsible for the 5' incision. The chain is UvrABC system protein C from Mycoplasmopsis bovis (strain ATCC 25523 / DSM 22781 / NCTC 10131 / PG45) (Mycoplasma bovis).